The following is a 464-amino-acid chain: Glutamate decarboxylase (464 aa).

N6-(pyridoxal phosphate)lysine is present on lysine 274.

Belongs to the group II decarboxylase family. Pyridoxal 5'-phosphate is required as a cofactor.

It catalyses the reaction L-glutamate + H(+) = 4-aminobutanoate + CO2. Its function is as follows. Catalyzes the pyridoxal-dependent decarboxylation of glutamate to produce 4-aminobutanoate. Has weak activity with aspartate, but cannot complement an E.coli panD deletion mutant. The protein is Glutamate decarboxylase of Aliivibrio fischeri (strain ATCC 700601 / ES114) (Vibrio fischeri).